Consider the following 361-residue polypeptide: UDP-N-acetylglucosamine--N-acetylmuramyl-(pentapeptide) pyrophosphoryl-undecaprenol N-acetylglucosamine transferase (361 aa).

Residues 11–13 (TGG), asparagine 120, arginine 161, serine 188, and glutamine 282 each bind UDP-N-acetyl-alpha-D-glucosamine.

Belongs to the glycosyltransferase 28 family. MurG subfamily.

Its subcellular location is the cell inner membrane. It catalyses the reaction di-trans,octa-cis-undecaprenyl diphospho-N-acetyl-alpha-D-muramoyl-L-alanyl-D-glutamyl-meso-2,6-diaminopimeloyl-D-alanyl-D-alanine + UDP-N-acetyl-alpha-D-glucosamine = di-trans,octa-cis-undecaprenyl diphospho-[N-acetyl-alpha-D-glucosaminyl-(1-&gt;4)]-N-acetyl-alpha-D-muramoyl-L-alanyl-D-glutamyl-meso-2,6-diaminopimeloyl-D-alanyl-D-alanine + UDP + H(+). It functions in the pathway cell wall biogenesis; peptidoglycan biosynthesis. In terms of biological role, cell wall formation. Catalyzes the transfer of a GlcNAc subunit on undecaprenyl-pyrophosphoryl-MurNAc-pentapeptide (lipid intermediate I) to form undecaprenyl-pyrophosphoryl-MurNAc-(pentapeptide)GlcNAc (lipid intermediate II). The chain is UDP-N-acetylglucosamine--N-acetylmuramyl-(pentapeptide) pyrophosphoryl-undecaprenol N-acetylglucosamine transferase from Prochlorococcus marinus (strain MIT 9303).